A 552-amino-acid polypeptide reads, in one-letter code: Protein psiB (552 aa).

Residues 1–18 (MKLLSVLITFLLATVIYS) form the signal peptide. A glycan (N-linked (GlcNAc...) asparagine) is linked at Asn-60. The PA14 domain maps to 114–255 (TYDTTRNIYV…EDYCGVCQGD (142 aa)). Residues Asn-281, Asn-313, Asn-340, Asn-365, Asn-446, Asn-472, and Asn-521 are each glycosylated (N-linked (GlcNAc...) asparagine).

It belongs to the prespore-cell-inducing factor family.

It is found in the secreted. The polypeptide is Protein psiB (psiB) (Dictyostelium discoideum (Social amoeba)).